The chain runs to 1607 residues: Phosphatidylinositol 3-kinase piki-1 (1607 aa).

Positions 2-21 (SDDEELQLAIEISKKTFKDE) constitute a UIM domain. Disordered regions lie at residues 54-91 (EANS…HSQS), 105-128 (STSQ…KFPP), and 142-182 (PPPP…SFAS). Residues 58 to 69 (PGPSSYSGSLAT) show a composition bias toward polar residues. The segment covering 158-169 (PPVPIHPTPPVS) has biased composition (pro residues). The 92-residue stretch at 362 to 453 (ASTVKVVVYK…GDDVKLDLGV (92 aa)) folds into the PI3K-RBD domain. Residues 598 to 766 (KMDFLQIMLN…KIWDTEIYFP (169 aa)) enclose the C2 PI3K-type domain. Positions 776–953 (PQDFATLDIE…AIRCQNLQQK (178 aa)) constitute a PIK helical domain. In terms of domain architecture, PI3K/PI4K catalytic spans 1029 to 1303 (RIEECSVFNS…MIQNSLGSAF (275 aa)). Residues 1035–1041 (VFNSNAK) are G-loop. The segment at 1168–1176 (GIGDRHNDN) is catalytic loop. An activation loop region spans residues 1187–1213 (HIDFGKYMGDWQMAAGFRRDRVPFVFT). The PX domain maps to 1344–1458 (GRISRVTVLK…TFFHSILRDN (115 aa)). One can recognise a C2 domain in the interval 1472–1601 (SQCQIYLKIE…KNCRTLEGWF (130 aa)).

The protein belongs to the PI3/PI4-kinase family.

The protein localises to the cell projection. Its subcellular location is the phagocytic cup. The protein resides in the cytoplasmic vesicle. It localises to the phagosome membrane. It is found in the cytoplasm. It catalyses the reaction a 1,2-diacyl-sn-glycero-3-phospho-(1D-myo-inositol) + ATP = a 1,2-diacyl-sn-glycero-3-phospho-(1D-myo-inositol-3-phosphate) + ADP + H(+). Functionally, phosphatidylinositol 3-kinase involved in clearance of apoptotic cell corpses by phagosomes. Phagosome maturation requires two sequential and non-overlapping pulses of phosphatidylinositol-3-phosphate (PI3P) on the vesicle surface which mediates recruitment of sortins snx-1 and lst-4 and small GTPases rab-5, rab-2 and rab-7. The first pulse is initiated by piki-1, then maintained by vps-34 which also produces the second pulse. Unlike vps-34, not involved in the formation of PI3P in early endosomes. This is Phosphatidylinositol 3-kinase piki-1 from Caenorhabditis elegans.